The primary structure comprises 129 residues: Glycine cleavage system H protein (129 aa).

A Lipoyl-binding domain is found at 24–106 (TYTVGITEHA…YAGGWIFKIK (83 aa)). At Lys-65 the chain carries N6-lipoyllysine.

Belongs to the GcvH family. In terms of assembly, the glycine cleavage system is composed of four proteins: P, T, L and H. (R)-lipoate is required as a cofactor.

The glycine cleavage system catalyzes the degradation of glycine. The H protein shuttles the methylamine group of glycine from the P protein to the T protein. The protein is Glycine cleavage system H protein of Shigella dysenteriae serotype 1 (strain Sd197).